Here is a 253-residue protein sequence, read N- to C-terminus: uncharacterized protein (253 aa).

6–30 provides a ligand contact to NADP(+); sequence IITASDSGIGKECALLLAQQGFDIG. Serine 140 lines the substrate pocket. Tyrosine 153 acts as the Proton acceptor in catalysis.

This sequence belongs to the short-chain dehydrogenases/reductases (SDR) family.

This is an uncharacterized protein from Escherichia coli (strain K12).